The sequence spans 253 residues: Precorrin-4 C(11)-methyltransferase (253 aa).

It belongs to the precorrin methyltransferase family.

It catalyses the reaction precorrin-4 + S-adenosyl-L-methionine = precorrin-5 + S-adenosyl-L-homocysteine. Its pathway is cofactor biosynthesis; adenosylcobalamin biosynthesis; cob(II)yrinate a,c-diamide from precorrin-2 (aerobic route): step 4/10. In terms of biological role, catalyzes the methylation of C-11 in precorrin-4 to form precorrin-5. The sequence is that of Precorrin-4 C(11)-methyltransferase (cobM) from Sinorhizobium sp.